We begin with the raw amino-acid sequence, 1116 residues long: Protein translocase subunit SecA (1116 aa).

ATP is bound by residues glutamine 177, 195-199 (GEGKT), and aspartate 692.

The protein belongs to the SecA family. In terms of assembly, monomer and homodimer. Part of the essential Sec protein translocation apparatus which comprises SecA, SecYEG and auxiliary proteins SecDF. Other proteins may also be involved.

The protein resides in the cell inner membrane. Its subcellular location is the cytoplasm. The catalysed reaction is ATP + H2O + cellular proteinSide 1 = ADP + phosphate + cellular proteinSide 2.. Its function is as follows. Part of the Sec protein translocase complex. Interacts with the SecYEG preprotein conducting channel. Has a central role in coupling the hydrolysis of ATP to the transfer of proteins into and across the cell membrane, serving as an ATP-driven molecular motor driving the stepwise translocation of polypeptide chains across the membrane. In Flavobacterium psychrophilum (strain ATCC 49511 / DSM 21280 / CIP 103535 / JIP02/86), this protein is Protein translocase subunit SecA.